The chain runs to 488 residues: Cytochrome P450 family 716 subfamily AD polypeptide 2 (488 aa).

The helical transmembrane segment at 5 to 25 threads the bilayer; the sequence is LLLLSTLLILTLCCHFFYLFI. Position 433 (C433) interacts with heme.

The protein belongs to the cytochrome P450 family. It depends on heme as a cofactor. In terms of tissue distribution, expressed in maturing fruits and in juice vesicles.

The protein resides in the membrane. It catalyses the reaction (1R,2R,3S,8R,10R,11R,15S,16S)-3-(acetyloxy)-15-[(4R)-4-[(2S)-3,3-dimethyloxiran-2-yl]-1,4-dihydroxybutan-2-yl]-2,7,7,11,16-pentamethyl-5-oxo-6-oxatetracyclo[9.7.0.0(2,8).0(12,16)]octadec-12-en-10-yl acetate + reduced [NADPH--hemoprotein reductase] + O2 = (1R,2R,3S,8R,10R,11R,15S,16S)-3-(acetyloxy)-15-(1-hydroxy-4-oxobutan-2-yl)-2,7,7,11,16-pentamethyl-5-oxo-6-oxatetracyclo[9.7.0.0(2,8).0(12,16)]octadec-12-en-10-yl acetate + 2-methylpropanoate + oxidized [NADPH--hemoprotein reductase] + H2O + 2 H(+). It participates in secondary metabolite biosynthesis; terpenoid biosynthesis. Its function is as follows. Monooxygenase involved in the biosynthesis of limonoids triterpene natural products such as limonin, a compound with insecticidal activity responsible for the bitter taste in citrus. Catalyzes the formation of (1R,2R,3S,8R,10R,11R,15S,16S)-3-(acetyloxy)-15-(1-hydroxy-4-oxobutan-2-yl)-2,7,7,11,16-pentamethyl-5-oxo-6-oxatetracyclo[9.7.0.0(2,8).0(12,16)]octadec-12-en-10-yl acetate. This chain is Cytochrome P450 family 716 subfamily AD polypeptide 2, found in Citrus sinensis (Sweet orange).